The primary structure comprises 67 residues: Protein Tpau_2998 (67 aa).

This is Protein Tpau_2998 from Tsukamurella paurometabola (strain ATCC 8368 / DSM 20162 / CCUG 35730 / CIP 100753 / JCM 10117 / KCTC 9821 / NBRC 16120 / NCIMB 702349 / NCTC 13040) (Corynebacterium paurometabolum).